A 129-amino-acid chain; its full sequence is Transmembrane protein 105 (129 aa).

The next 2 helical transmembrane spans lie at 23–43 (AGNV…TAWL) and 94–114 (FLAG…CGVV).

The protein localises to the membrane. The polypeptide is Transmembrane protein 105 (TMEM105) (Homo sapiens (Human)).